Consider the following 299-residue polypeptide: MKTKLIVVAGPTAVGKTALGIELAERFNGEIISGDSQQVYRQLNIGTAKATPEEQAAAVHHLIDVRDVDESYSAYDFVTEAQAAITDIVSRGKLPIIVGGTGLYLQSLLEGYHLGGKVDQNQVLAYRSELEQLSDQQLFEKIDSSGIEIKEINRRRAIRALELYRFSDNLENTETCYEPFIIGLDDERSLIYDRINTRVDKMVELGLLEEAKWLYDNFPEAQSARGIGYKELFPYFSGEQTLDEALEKLKQNTRRFAKRQLTWFRNRMTVSFYQISSPEYPENVIQDLAIFLNEEEGEK.

Gly-10–Thr-17 is an ATP binding site. Thr-12 to Thr-17 is a binding site for substrate. The segment at Asp-35–Gln-38 is interaction with substrate tRNA.

The protein belongs to the IPP transferase family. In terms of assembly, monomer. Requires Mg(2+) as cofactor.

It catalyses the reaction adenosine(37) in tRNA + dimethylallyl diphosphate = N(6)-dimethylallyladenosine(37) in tRNA + diphosphate. In terms of biological role, catalyzes the transfer of a dimethylallyl group onto the adenine at position 37 in tRNAs that read codons beginning with uridine, leading to the formation of N6-(dimethylallyl)adenosine (i(6)A). The polypeptide is tRNA dimethylallyltransferase (Streptococcus thermophilus (strain CNRZ 1066)).